The chain runs to 607 residues: Large ribosomal subunit assembly factor BipA (607 aa).

Residues 3–198 form the tr-type G domain; it reads EKLRNIAIIA…AIVDHVPAPD (196 aa). GTP-binding positions include 15-20 and 128-131; these read DHGKTT and NKVD.

It belongs to the TRAFAC class translation factor GTPase superfamily. Classic translation factor GTPase family. BipA subfamily. As to quaternary structure, monomer.

It localises to the cytoplasm. It carries out the reaction GTP + H2O = GDP + phosphate + H(+). Its function is as follows. A 50S ribosomal subunit assembly protein with GTPase activity, required for 50S subunit assembly at low temperatures, may also play a role in translation. Binds GTP and analogs. Binds the 70S ribosome between the 30S and 50S subunits, in a similar position as ribosome-bound EF-G; it contacts a number of ribosomal proteins, both rRNAs and the A-site tRNA. The polypeptide is Large ribosomal subunit assembly factor BipA (Shigella flexneri).